A 114-amino-acid polypeptide reads, in one-letter code: Ribosome-binding factor A (114 aa).

This sequence belongs to the RbfA family. In terms of assembly, monomer. Binds 30S ribosomal subunits, but not 50S ribosomal subunits or 70S ribosomes.

It localises to the cytoplasm. One of several proteins that assist in the late maturation steps of the functional core of the 30S ribosomal subunit. Associates with free 30S ribosomal subunits (but not with 30S subunits that are part of 70S ribosomes or polysomes). Required for efficient processing of 16S rRNA. May interact with the 5'-terminal helix region of 16S rRNA. The chain is Ribosome-binding factor A from Staphylococcus saprophyticus subsp. saprophyticus (strain ATCC 15305 / DSM 20229 / NCIMB 8711 / NCTC 7292 / S-41).